Reading from the N-terminus, the 687-residue chain is Adhesion G-protein coupled receptor G1 (687 aa).

The N-terminal stretch at 1-25 is a signal peptide; that stretch reads MTAQSLLQTTLFLLSLLFLVQGAHG. 26–33 lines the heparin pocket; the sequence is RGHREDFR. Over 26 to 402 the chain is Extracellular; the sequence is RGHREDFRFC…VEVDAVHKHY (377 aa). Cystine bridges form between Cys35–Cys91 and Cys121–Cys177. Residues Asn39, Asn148, Asn156, and Asn171 are each glycosylated (N-linked (GlcNAc...) asparagine). Residue 190–200 coordinates heparin; that stretch reads LKHPQKASRRP. The region spanning 224 to 395 is the GAIN-B domain; sequence DTVSFEEDRV…AVLMVSSVEV (172 aa). N-linked (GlcNAc...) asparagine glycans are attached at residues Asn234, Asn303, Asn324, and Asn341. 2 cysteine pairs are disulfide-bonded: Cys346–Cys377 and Cys366–Cys379. Positions 346–395 are GPS; it reads CVFWVEDPTLSNPGRWSSAGCETVRRETQTSCFCNHLTYFAVLMVSSVEV. The interval 384–397 is stachel; that stretch reads YFAVLMVSSVEVDA. Residues 403 to 423 form a helical membrane-spanning segment; that stretch reads LSLLSYVGCVVSALACVVTIA. The Cytoplasmic portion of the chain corresponds to 424 to 442; that stretch reads AYLCSRRKPRDYTIKVHMN. The chain crosses the membrane as a helical span at residues 443–463; that stretch reads LLLAVFLLDVSFLLSEPVALT. The Extracellular segment spans residues 464–470; that stretch reads GSQSGCR. A helical transmembrane segment spans residues 471-491; it reads ASAIFLHFSLLACLSWMGLEG. The Cytoplasmic portion of the chain corresponds to 492–512; sequence YNLYRLVVEVFGTYIPGYLLK. Residues 513 to 533 traverse the membrane as a helical segment; it reads LSAMGWGFPIFLVTLVALVDV. At 534–570 the chain is on the extracellular side; that stretch reads DNYGPIILAVHRTPESVIYPSMCWIRDSLVSYITNLG. Residues 571–591 traverse the membrane as a helical segment; sequence LFSLVFLFNMAMLGTMVVQIL. At 592–603 the chain is on the cytoplasmic side; the sequence is RLRPHTQKWSHV. Residues 604–624 traverse the membrane as a helical segment; the sequence is LTLLGLSLVLGLPWALIFFSF. Over 625–630 the chain is Extracellular; that stretch reads ASGTFQ. A helical membrane pass occupies residues 631–651; the sequence is LVVLYLFSIITSFQGFLIFLW. Topologically, residues 652–687 are cytoplasmic; sequence YWSMRLQARGGPSPLKSNSDSARLPISTGSTSSSRI. Positions 664-687 are disordered; that stretch reads SPLKSNSDSARLPISTGSTSSSRI. Over residues 666-687 the composition is skewed to polar residues; that stretch reads LKSNSDSARLPISTGSTSSSRI.

The protein belongs to the G-protein coupled receptor 2 family. LN-TM7 subfamily. As to quaternary structure, heterodimer of 2 chains generated by proteolytic processing; the large extracellular N-terminal fragment (ADGRG1 NT) and the membrane-bound C-terminal fragment (ADGRG1-CT) predominantly remain associated and non-covalently linked. ADGRG1 NT self-associates in a trans-trans manner; the homophilic interaction enhances receptor signaling. Interacts with TGM2. Interacts with heparin; leading to the reduction of ADGRG1 shedding. Interacts with COL3A1. Part of a GPCR-tetraspanin complex at least consisting of ADGRG1, CD81, eventually CD9, and GNA11 in which CD81 is enhancing the association of ADGRG1 with GNA11. Autoproteolytically cleaved into 2 fragments; the large extracellular N-terminal fragment (ADGRG1 NT) and the membrane-bound C-terminal fragment (ADGRG1 CT) predominantly remain associated and non-covalently linked. Shedding to yield the secreted ADGRG1 N-terminal fragment seems to involve metalloprotease(s). Post-translationally, ubiquitinated. Undergoes polyubiquitination upon activation.

It is found in the cell membrane. The protein localises to the secreted. The protein resides in the membrane raft. Forms a heterodimer of 2 chains generated by proteolytic processing that remain associated through non-covalent interactions mediated by the GAIN-B domain. In the inactivated receptor, the Stachel sequence (also named stalk) is embedded in the GAIN-B domain, where it adopts a beta-strand conformation. On activation, the Stachel moves into the 7 transmembrane region and adopts a twisted hook-shaped configuration that forms contacts within the receptor, leading to coupling of a G-alpha protein, which activates signaling. The cleaved GAIN-B and N-terminal domains can then dissociate from the rest of the receptor. Adhesion G-protein coupled receptor (aGPCR) for steroid hormone 17alpha-hydroxypregnenolone (17-OH), which is involved in cell adhesion and cell-cell interactions. Ligand binding causes a conformation change that triggers signaling via guanine nucleotide-binding proteins (G proteins) and modulates the activity of downstream effectors, such as RhoA pathway. ADGRG1 is coupled to G(12) and/or G(13) G proteins (GNA12 and GNA13, respectively) and mediates the activation Rho small GTPases. Acts as a potent suppressor of ferroptosis: binding to 17-OH-binding initiates signaling that down-regulates CD36 and alleviates ferroptosis-induced liver injury. Ligand-binding also induces cell adhesion activity via association with proteins such as collagen III/COL3A1 and TGM2. Mediates cell matrix adhesion in developing neurons and hematopoietic stem cells. Involved in cortical development, specifically in maintenance of the pial basement membrane integrity and in cortical lamination: association with COL3A1 in the developing brain inhibits neuronal migration via activation of the RhoA pathway. Together with TGM2, acts as a regulator of myelination and myelin repair in oligodendrocyte precursor cells. Acts as a hemostatic sensor of shear force: G protein-coupled receptor signaling is activated in response to shear force in platelets, promoting G(13) G protein signaling, and platelet shape change and aggregation in a COL3A1-dependent manner. Acts as an inhibitor of VEGFA production thereby inhibiting angiogenesis through a signaling pathway mediated by PRKCA. Plays a role in the maintenance of hematopoietic stem cells in bone marrow niche. Plays an essential role in testis development. The sequence is that of Adhesion G-protein coupled receptor G1 (ADGRG1) from Macaca mulatta (Rhesus macaque).